The sequence spans 405 residues: Phosphoglycerate kinase (405 aa).

Substrate is bound by residues 24–26, arginine 40, 63–66, arginine 122, and arginine 162; these read DFN and HLGR. Residues lysine 212, glutamate 331, and 361–364 each bind ATP; that span reads GGDS.

This sequence belongs to the phosphoglycerate kinase family. As to quaternary structure, monomer.

The protein localises to the cytoplasm. The enzyme catalyses (2R)-3-phosphoglycerate + ATP = (2R)-3-phospho-glyceroyl phosphate + ADP. Its pathway is carbohydrate degradation; glycolysis; pyruvate from D-glyceraldehyde 3-phosphate: step 2/5. The protein is Phosphoglycerate kinase of Corynebacterium glutamicum (strain R).